Consider the following 168-residue polypeptide: Small ribosomal subunit protein bS16 (168 aa).

The interval 110 to 168 (LAEAEGGPSNEATQPKKKKAPAKKAASDIEATADPAGNADKSEPAAEGEDATVAGATEG) is disordered.

The protein belongs to the bacterial ribosomal protein bS16 family.

The chain is Small ribosomal subunit protein bS16 from Mycobacterium sp. (strain JLS).